The following is a 524-amino-acid chain: Histidine ammonia-lyase (524 aa).

Residues 139 to 141 (ASG) constitute a cross-link (5-imidazolinone (Ala-Gly)). S140 carries the post-translational modification 2,3-didehydroalanine (Ser). Residues 500–524 (ADTQAPAPAKLPDSGDEDRDTTSRH) form a disordered region.

This sequence belongs to the PAL/histidase family. Contains an active site 4-methylidene-imidazol-5-one (MIO), which is formed autocatalytically by cyclization and dehydration of residues Ala-Ser-Gly.

It is found in the cytoplasm. The catalysed reaction is L-histidine = trans-urocanate + NH4(+). The protein operates within amino-acid degradation; L-histidine degradation into L-glutamate; N-formimidoyl-L-glutamate from L-histidine: step 1/3. The chain is Histidine ammonia-lyase (hutH) from Deinococcus radiodurans (strain ATCC 13939 / DSM 20539 / JCM 16871 / CCUG 27074 / LMG 4051 / NBRC 15346 / NCIMB 9279 / VKM B-1422 / R1).